We begin with the raw amino-acid sequence, 247 residues long: 3-deoxy-manno-octulosonate cytidylyltransferase (247 aa).

It belongs to the KdsB family.

The protein localises to the cytoplasm. It carries out the reaction 3-deoxy-alpha-D-manno-oct-2-ulosonate + CTP = CMP-3-deoxy-beta-D-manno-octulosonate + diphosphate. Its pathway is nucleotide-sugar biosynthesis; CMP-3-deoxy-D-manno-octulosonate biosynthesis; CMP-3-deoxy-D-manno-octulosonate from 3-deoxy-D-manno-octulosonate and CTP: step 1/1. It functions in the pathway bacterial outer membrane biogenesis; lipopolysaccharide biosynthesis. Its function is as follows. Activates KDO (a required 8-carbon sugar) for incorporation into bacterial lipopolysaccharide in Gram-negative bacteria. The chain is 3-deoxy-manno-octulosonate cytidylyltransferase from Methylobacterium sp. (strain 4-46).